A 473-amino-acid polypeptide reads, in one-letter code: Argininosuccinate lyase (473 aa).

It belongs to the lyase 1 family. Argininosuccinate lyase subfamily.

Its subcellular location is the cytoplasm. It catalyses the reaction 2-(N(omega)-L-arginino)succinate = fumarate + L-arginine. Its pathway is amino-acid biosynthesis; L-arginine biosynthesis; L-arginine from L-ornithine and carbamoyl phosphate: step 3/3. The polypeptide is Argininosuccinate lyase (Streptomyces clavuligerus).